A 128-amino-acid polypeptide reads, in one-letter code: Transcription antitermination protein NusB (128 aa).

Belongs to the NusB family.

In terms of biological role, involved in transcription antitermination. Required for transcription of ribosomal RNA (rRNA) genes. Binds specifically to the boxA antiterminator sequence of the ribosomal RNA (rrn) operons. The chain is Transcription antitermination protein NusB from Listeria monocytogenes serotype 4b (strain CLIP80459).